The sequence spans 64 residues: Large ribosomal subunit protein bL33c (64 aa).

The protein belongs to the bacterial ribosomal protein bL33 family.

The protein localises to the plastid. It localises to the chloroplast. This is Large ribosomal subunit protein bL33c from Huperzia lucidula (Shining clubmoss).